The primary structure comprises 210 residues: Endonuclease III (210 aa).

The HhH domain occupies 108–127; that stretch reads RIELESLPGVGRKTANIILN. Residues Cys-187, Cys-194, Cys-197, and Cys-203 each coordinate [4Fe-4S] cluster.

It belongs to the Nth/MutY family. It depends on [4Fe-4S] cluster as a cofactor.

The catalysed reaction is 2'-deoxyribonucleotide-(2'-deoxyribose 5'-phosphate)-2'-deoxyribonucleotide-DNA = a 3'-end 2'-deoxyribonucleotide-(2,3-dehydro-2,3-deoxyribose 5'-phosphate)-DNA + a 5'-end 5'-phospho-2'-deoxyribonucleoside-DNA + H(+). Its function is as follows. DNA repair enzyme that has both DNA N-glycosylase activity and AP-lyase activity. The DNA N-glycosylase activity releases various damaged pyrimidines from DNA by cleaving the N-glycosidic bond, leaving an AP (apurinic/apyrimidinic) site. The AP-lyase activity cleaves the phosphodiester bond 3' to the AP site by a beta-elimination, leaving a 3'-terminal unsaturated sugar and a product with a terminal 5'-phosphate. In Buchnera aphidicola subsp. Acyrthosiphon pisum (strain APS) (Acyrthosiphon pisum symbiotic bacterium), this protein is Endonuclease III.